The primary structure comprises 131 residues: Small ribosomal subunit protein uS8 (131 aa).

Belongs to the universal ribosomal protein uS8 family. As to quaternary structure, part of the 30S ribosomal subunit. Contacts proteins S5 and S12.

One of the primary rRNA binding proteins, it binds directly to 16S rRNA central domain where it helps coordinate assembly of the platform of the 30S subunit. In Sulfurimonas denitrificans (strain ATCC 33889 / DSM 1251) (Thiomicrospira denitrificans (strain ATCC 33889 / DSM 1251)), this protein is Small ribosomal subunit protein uS8.